We begin with the raw amino-acid sequence, 332 residues long: Malate dehydrogenase (332 aa).

NAD(+) contacts are provided by residues 16 to 17 (QI), aspartate 43, and glycine 90. Residue arginine 99 participates in oxaloacetate binding. NAD(+) is bound by residues glutamine 113 and asparagine 132. Residues asparagine 132, arginine 163, histidine 188, and serine 243 each coordinate oxaloacetate. The Proton acceptor role is filled by histidine 188.

Belongs to the LDH/MDH superfamily. MDH type 2 family. As to quaternary structure, homodimer.

The protein localises to the cytoplasm. The catalysed reaction is (S)-malate + NAD(+) = oxaloacetate + NADH + H(+). In terms of biological role, catalyzes the reduction of the carbonyl group of oxalacetic acid. No activity with pulegone. This chain is Malate dehydrogenase (MD1), found in Nicotiana tabacum (Common tobacco).